The primary structure comprises 1029 residues: mRNA 3'-end-processing protein rna14 (1029 aa).

2 disordered regions span residues 1 to 177 and 225 to 251; these read MAEE…PDVS and GNVQ…PHDR. Over residues 21-32 the composition is skewed to basic and acidic residues; it reads VDYKAVEEHGAD. Composition is skewed to polar residues over residues 43-79 and 104-119; these read KTLQ…NSVQ and TSTM…QPKT. Positions 127–140 are enriched in acidic residues; that stretch reads VEDEDEDDAGDADY. A compositionally biased stretch (polar residues) spans 153–175; that stretch reads TVATNVPQQSVSGNENEASSTPD. A compositionally biased stretch (low complexity) spans 229 to 243; it reads DSATATPTPDSPSTS. HAT repeat units lie at residues 281 to 313, 315 to 346, 357 to 392, 406 to 439, 469 to 509, and 521 to 553; these read NRFD…MESE, NDLY…YVRR, QARR…FIKS, QKMD…FEMG, ITRD…WEKG, and AFKG…FCFL. Disordered stretches follow at residues 634–664, 853–951, and 996–1023; these read TFAK…ESVK, TAVR…GSPA, and IPLP…SPSL. A compositionally biased stretch (basic and acidic residues) spans 894-908; that stretch reads SPKRPLEDFDDDYNR. 2 stretches are compositionally biased toward polar residues: residues 932–949 and 1006–1023; these read RSQL…SQGS and GTTQ…SPSL.

It is found in the nucleus. The protein resides in the cytoplasm. Functionally, component of the cleavage factor IA (CFIA) complex, which is involved in the endonucleolytic cleavage during polyadenylation-dependent pre-mRNA 3'-end formation. The polypeptide is mRNA 3'-end-processing protein rna14 (rna14) (Aspergillus fumigatus (strain ATCC MYA-4609 / CBS 101355 / FGSC A1100 / Af293) (Neosartorya fumigata)).